Reading from the N-terminus, the 367-residue chain is Heat-inducible transcription repressor HrcA (367 aa).

Belongs to the HrcA family.

Functionally, negative regulator of class I heat shock genes (grpE-dnaK-dnaJ and groELS operons). Prevents heat-shock induction of these operons. The protein is Heat-inducible transcription repressor HrcA of Acaryochloris marina (strain MBIC 11017).